Consider the following 152-residue polypeptide: Putative peroxiredoxin bcp (152 aa).

Residues 4–152 (LEVGQLAPDF…GHAQKVLESL (149 aa)) form the Thioredoxin domain. Catalysis depends on Cys46, which acts as the Cysteine sulfenic acid (-SOH) intermediate. The cysteines at positions 46 and 85 are disulfide-linked.

This sequence belongs to the peroxiredoxin family. BCP/PrxQ subfamily. As to quaternary structure, monomer.

It catalyses the reaction a hydroperoxide + [thioredoxin]-dithiol = an alcohol + [thioredoxin]-disulfide + H2O. Functionally, thiol-specific peroxidase that catalyzes the reduction of hydrogen peroxide and organic hydroperoxides to water and alcohols, respectively. Plays a role in cell protection against oxidative stress by detoxifying peroxides and as sensor of hydrogen peroxide-mediated signaling events. This chain is Putative peroxiredoxin bcp (bcp), found in Helicobacter pylori (strain J99 / ATCC 700824) (Campylobacter pylori J99).